Reading from the N-terminus, the 239-residue chain is Protein GrpE (239 aa).

2 disordered regions span residues 1-60 (MIEN…SNND) and 208-239 (SMGPGKQKSQQEVEKDTVEGDVDSDANTSEDV). Polar residues predominate over residues 28 to 42 (SMQNSTTENDELSSQ). Composition is skewed to basic and acidic residues over residues 43 to 53 (KTEEINTEELK) and 216 to 225 (SQQEVEKDTV). Acidic residues predominate over residues 226 to 239 (EGDVDSDANTSEDV).

The protein belongs to the GrpE family. In terms of assembly, homodimer.

It localises to the cytoplasm. In terms of biological role, participates actively in the response to hyperosmotic and heat shock by preventing the aggregation of stress-denatured proteins, in association with DnaK and GrpE. It is the nucleotide exchange factor for DnaK and may function as a thermosensor. Unfolded proteins bind initially to DnaJ; upon interaction with the DnaJ-bound protein, DnaK hydrolyzes its bound ATP, resulting in the formation of a stable complex. GrpE releases ADP from DnaK; ATP binding to DnaK triggers the release of the substrate protein, thus completing the reaction cycle. Several rounds of ATP-dependent interactions between DnaJ, DnaK and GrpE are required for fully efficient folding. This is Protein GrpE from Prochlorococcus marinus (strain MIT 9301).